Here is a 369-residue protein sequence, read N- to C-terminus: Delta(14)-sterol reductase (369 aa).

Transmembrane regions (helical) follow at residues 15–34 (QSVYVLVFYFVYLAVAGEIL), 54–76 (CNGLLALILLVAILGICAKLGIV), 86–105 (LELLSATFIFCVLVTLALYV), 146–168 (FFFVRAGMMGWLLINLSILAKSV), 178–195 (ILYQIFCALYILDYFVHE), 208–230 (RLGFMLVFGDLLWIPFTFSIQGW), and 240–262 (TVPAIVVNCLVFLIGYMVFRGAN). NADP(+) is bound by residues lysine 265, lysine 269, leucine 289, tryptophan 294, and 301–302 (NY). A helical membrane pass occupies residues 275-297 (PIWGKPPVVVGGKLLVSGYWGIA). A helical membrane pass occupies residues 317–336 (GISSPVPYFYPIYLLILLIW). Residues aspartate 341, 345–349 (CAEKY), and tyrosine 356 contribute to the NADP(+) site.

This sequence belongs to the ERG4/ERG24 family.

Its subcellular location is the membrane. The catalysed reaction is 4,4-dimethyl-5alpha-cholesta-8,24-dien-3beta-ol + NADP(+) = 4,4-dimethyl-5alpha-cholesta-8,14,24-trien-3beta-ol + NADPH + H(+). The protein operates within steroid biosynthesis; zymosterol biosynthesis; zymosterol from lanosterol: step 2/6. Its function is as follows. Reduces the C14=C15 double bond of 4,4-dimethyl-cholesta-8,14,24-trienol to produce 4,4-dimethyl-cholesta-8,24-dienol. Required for cell division and expansion and is involved in proper organization of the embryo. This chain is Delta(14)-sterol reductase (FK), found in Arabidopsis thaliana (Mouse-ear cress).